The sequence spans 317 residues: 4-hydroxy-3-methylbut-2-enyl diphosphate reductase (317 aa).

Residue Cys-12 participates in [4Fe-4S] cluster binding. 2 residues coordinate (2E)-4-hydroxy-3-methylbut-2-enyl diphosphate: His-41 and His-74. Dimethylallyl diphosphate is bound by residues His-41 and His-74. Isopentenyl diphosphate contacts are provided by His-41 and His-74. Cys-96 lines the [4Fe-4S] cluster pocket. Position 124 (His-124) interacts with (2E)-4-hydroxy-3-methylbut-2-enyl diphosphate. Position 124 (His-124) interacts with dimethylallyl diphosphate. His-124 serves as a coordination point for isopentenyl diphosphate. Glu-126 functions as the Proton donor in the catalytic mechanism. Thr-168 contacts (2E)-4-hydroxy-3-methylbut-2-enyl diphosphate. Residue Cys-198 participates in [4Fe-4S] cluster binding. (2E)-4-hydroxy-3-methylbut-2-enyl diphosphate is bound by residues Ser-226, Ser-227, Asn-228, and Ser-270. Dimethylallyl diphosphate contacts are provided by Ser-226, Ser-227, Asn-228, and Ser-270. Residues Ser-226, Ser-227, Asn-228, and Ser-270 each contribute to the isopentenyl diphosphate site.

It belongs to the IspH family. Requires [4Fe-4S] cluster as cofactor.

The enzyme catalyses isopentenyl diphosphate + 2 oxidized [2Fe-2S]-[ferredoxin] + H2O = (2E)-4-hydroxy-3-methylbut-2-enyl diphosphate + 2 reduced [2Fe-2S]-[ferredoxin] + 2 H(+). The catalysed reaction is dimethylallyl diphosphate + 2 oxidized [2Fe-2S]-[ferredoxin] + H2O = (2E)-4-hydroxy-3-methylbut-2-enyl diphosphate + 2 reduced [2Fe-2S]-[ferredoxin] + 2 H(+). It participates in isoprenoid biosynthesis; dimethylallyl diphosphate biosynthesis; dimethylallyl diphosphate from (2E)-4-hydroxy-3-methylbutenyl diphosphate: step 1/1. It functions in the pathway isoprenoid biosynthesis; isopentenyl diphosphate biosynthesis via DXP pathway; isopentenyl diphosphate from 1-deoxy-D-xylulose 5-phosphate: step 6/6. In terms of biological role, catalyzes the conversion of 1-hydroxy-2-methyl-2-(E)-butenyl 4-diphosphate (HMBPP) into a mixture of isopentenyl diphosphate (IPP) and dimethylallyl diphosphate (DMAPP). Acts in the terminal step of the DOXP/MEP pathway for isoprenoid precursor biosynthesis. The sequence is that of 4-hydroxy-3-methylbut-2-enyl diphosphate reductase from Hahella chejuensis (strain KCTC 2396).